The following is a 444-amino-acid chain: Xaa-Pro dipeptidase (444 aa).

Mn(2+) contacts are provided by D247, D258, H340, E385, and E424.

This sequence belongs to the peptidase M24B family. Bacterial-type prolidase subfamily. Requires Mn(2+) as cofactor.

It catalyses the reaction Xaa-L-Pro dipeptide + H2O = an L-alpha-amino acid + L-proline. Splits dipeptides with a prolyl residue in the C-terminal position. In Photorhabdus laumondii subsp. laumondii (strain DSM 15139 / CIP 105565 / TT01) (Photorhabdus luminescens subsp. laumondii), this protein is Xaa-Pro dipeptidase.